The primary structure comprises 468 residues: Na(+)/H(+) antiporter NhaA (468 aa).

12 helical membrane-spanning segments follow: residues 28–48 (FLHV…IALV), 79–99 (LHFW…GMEI), 115–135 (ALPL…YLAF), 143–163 (AGWA…LALL), 173–193 (IFLL…IAFF), 196–216 (GGLD…VLGL), 219–239 (IGIG…TGLL), 240–260 (MTGA…PVVP), 317–337 (ALHP…NAGV), 356–376 (VAGA…WLLV), 392–412 (IVLI…IAML), and 426–446 (LGVL…GAIY).

Belongs to the NhaA Na(+)/H(+) (TC 2.A.33) antiporter family.

It localises to the cell inner membrane. It catalyses the reaction Na(+)(in) + 2 H(+)(out) = Na(+)(out) + 2 H(+)(in). Functionally, na(+)/H(+) antiporter that extrudes sodium in exchange for external protons. This Bordetella petrii (strain ATCC BAA-461 / DSM 12804 / CCUG 43448) protein is Na(+)/H(+) antiporter NhaA.